We begin with the raw amino-acid sequence, 163 residues long: Interleukin-17F (163 aa).

The first 30 residues, 1 to 30 (MTVKTLHGPAMVKYLLLSILGLAFLSEAAA), serve as a signal peptide directing secretion. Asn-83 is a glycosylation site (N-linked (GlcNAc...) asparagine). 2 disulfide bridges follow: Cys-102-Cys-152 and Cys-107-Cys-154.

It belongs to the IL-17 family. In terms of assembly, homodimer; disulfide-linked. Heterodimer with IL17A (IL17A-IL17F). Forms complexes with IL17RA and IL17RC receptors with 2:1 binding stoichiometry: two receptor chains for one interleukin molecule. IL17F homodimer forms predominantly complexes with IL17RC homodimer, whereas IL17A-IL17F favors complexes with IL17RA-IL17RC. IL17RA and IL17RC chains cannot distinguish between IL17A and IL17F molecules, potentially enabling the formation of topologically distinct complexes. In terms of tissue distribution, expressed in T-helper 1 and T-helper 2 cells, basophils and mast cells.

It is found in the secreted. In terms of biological role, effector cytokine of innate and adaptive immune system involved in antimicrobial host defense and maintenance of tissue integrity. IL17A-IL17F signals via IL17RA-IL17RC heterodimeric receptor complex, triggering homotypic interaction of IL17RA and IL17RC chains with TRAF3IP2 adapter through SEFIR domains. This leads to downstream TRAF6-mediated activation of NF-kappa-B and MAPkinase pathways ultimately resulting in transcriptional activation of cytokines, chemokines, antimicrobial peptides and matrix metalloproteinases, with potential strong immune inflammation. IL17A-IL17F is primarily involved in host defense against extracellular bacteria and fungi by inducing neutrophilic inflammation. As signature effector cytokine of T-helper 17 cells (Th17), primarily induces neutrophil activation and recruitment at infection and inflammatory sites. Stimulates the production of antimicrobial beta-defensins DEFB1, DEFB103A, and DEFB104A by mucosal epithelial cells, limiting the entry of microbes through the epithelial barriers. IL17F homodimer can signal via IL17RC homodimeric receptor complex, triggering downstream activation of TRAF6 and NF-kappa-B signaling pathway. Via IL17RC induces transcriptional activation of IL33, a potent cytokine that stimulates group 2 innate lymphoid cells and adaptive T-helper 2 cells involved in pulmonary allergic response to fungi. Likely via IL17RC, promotes sympathetic innervation of peripheral organs by coordinating the communication between gamma-delta T cells and parenchymal cells. Stimulates sympathetic innervation of thermogenic adipose tissue by driving TGFB1 expression. Regulates the composition of intestinal microbiota and immune tolerance by inducing antimicrobial proteins that specifically control the growth of commensal Firmicutes and Bacteroidetes. The chain is Interleukin-17F (IL17F) from Homo sapiens (Human).